We begin with the raw amino-acid sequence, 462 residues long: Zinc transporter 6-B (462 aa).

Residues 1 to 33 (MGTIYLFRKTQRSLLGKLTQEFRLVTADRRSWK) are Cytoplasmic-facing. Residues 34 to 54 (ILLFGAINVVCTGFLLTWCSS) traverse the membrane as a helical segment. The Extracellular segment spans residues 55 to 64 (TNSMALTAYT). The helical transmembrane segment at 65–85 (YLTIFDLFSLITSLISYWVMM) threads the bilayer. At 86–98 (KKPSPTYSFGFER) the chain is on the cytoplasmic side. The chain crosses the membrane as a helical span at residues 99-119 (LEVLAVFASTVLAQLGALFIL). The Extracellular portion of the chain corresponds to 120–134 (KESAERFLEQPEIHT). A helical membrane pass occupies residues 135-155 (GRLLVGTFVALFFNLFTMLSI). Topologically, residues 156–200 (RNKPFAYVSEAASTSWLQEHVADLSRSLCGVIPGLSSIFLPRMNP) are cytoplasmic. A helical membrane pass occupies residues 201 to 221 (FVLIDIAGALALCITYMLIEI). At 222–223 (NN) the chain is on the extracellular side. Residues 224–244 (YFAVDTASAIAIAVMTFGTMY) form a helical membrane-spanning segment. At 245–462 (PMSVYSGKVL…TPGQFTQFRQ (218 aa)) the chain is on the cytoplasmic side.

Belongs to the cation diffusion facilitator (CDF) transporter (TC 2.A.4) family. SLC30A subfamily. Heterodimer with SLC30A5; form a functional zinc ion transmembrane transporter.

The protein localises to the golgi apparatus. The protein resides in the trans-Golgi network membrane. In terms of biological role, has probably no intrinsic transporter activity but together with SLC30A5 forms a functional zinc ion:proton antiporter heterodimer, mediating zinc entry into the lumen of organelles along the secretory pathway. As part of that zinc ion:proton antiporter, contributes to zinc ion homeostasis within the early secretory pathway and regulates the activation and folding of enzymes like alkaline phosphatases and enzymes involved in phosphatidylinositol glycan anchor biosynthesis. This is Zinc transporter 6-B (slc30a6-b) from Xenopus laevis (African clawed frog).